A 198-amino-acid polypeptide reads, in one-letter code: Glycerol-3-phosphate acyltransferase 1 (198 aa).

5 helical membrane-spanning segments follow: residues 5–25 (ALLA…AWLA), 52–72 (GPAL…VLLA), 81–101 (WAAL…FLAF), 111–131 (FGVI…LAIA), and 138–158 (FVSA…LVLP).

It belongs to the PlsY family. In terms of assembly, probably interacts with PlsX.

The protein localises to the cell membrane. It carries out the reaction an acyl phosphate + sn-glycerol 3-phosphate = a 1-acyl-sn-glycero-3-phosphate + phosphate. It participates in lipid metabolism; phospholipid metabolism. Functionally, catalyzes the transfer of an acyl group from acyl-phosphate (acyl-PO(4)) to glycerol-3-phosphate (G3P) to form lysophosphatidic acid (LPA). This enzyme utilizes acyl-phosphate as fatty acyl donor, but not acyl-CoA or acyl-ACP. This chain is Glycerol-3-phosphate acyltransferase 1, found in Deinococcus radiodurans (strain ATCC 13939 / DSM 20539 / JCM 16871 / CCUG 27074 / LMG 4051 / NBRC 15346 / NCIMB 9279 / VKM B-1422 / R1).